Consider the following 157-residue polypeptide: SsrA-binding protein (157 aa).

The protein belongs to the SmpB family.

The protein localises to the cytoplasm. Required for rescue of stalled ribosomes mediated by trans-translation. Binds to transfer-messenger RNA (tmRNA), required for stable association of tmRNA with ribosomes. tmRNA and SmpB together mimic tRNA shape, replacing the anticodon stem-loop with SmpB. tmRNA is encoded by the ssrA gene; the 2 termini fold to resemble tRNA(Ala) and it encodes a 'tag peptide', a short internal open reading frame. During trans-translation Ala-aminoacylated tmRNA acts like a tRNA, entering the A-site of stalled ribosomes, displacing the stalled mRNA. The ribosome then switches to translate the ORF on the tmRNA; the nascent peptide is terminated with the 'tag peptide' encoded by the tmRNA and targeted for degradation. The ribosome is freed to recommence translation, which seems to be the essential function of trans-translation. The protein is SsrA-binding protein of Chlorobium luteolum (strain DSM 273 / BCRC 81028 / 2530) (Pelodictyon luteolum).